A 288-amino-acid chain; its full sequence is MFEPVPDLNLEASVELGEVNIDQTTPMIKENSGFISRSRRLFAHRSKDDERKLALRFFLQRLYFLDHREIHYLFRCVDAVKDVTITKKNNIIVAPYIALLTIASKGCKLTETMIEAFFPELYNEHSKKFKFNSQVSIIQEKLGYQFGNYHVYDFEPYYSTVALAIRDEHSSGIFNIRQESYLVSSLSEITYRFYLINLKSDLVQWSASTGAVINQMVNTVLITVYEKLQLVIENDSQFTCSLAVESELPIKLLKDRNELFTKFINELKKTSSFKISKRDKDTLLKYFT.

This sequence belongs to the orthopoxvirus OPG134 family. As to quaternary structure, heterodimer of a 45 kDa (A23R) and a 32 kDa (A8R) subunit to form the virus intermediate transcription factor (VITF)-3.

In terms of biological role, acts with RNA polymerase to initiate transcription from intermediate gene promoters. This chain is Intermediate transcription factor 3 small subunit (OPG134), found in Vaccinia virus (strain Copenhagen) (VACV).